The sequence spans 385 residues: GTPase Obg (385 aa).

The Obg domain occupies 1–159; the sequence is MKFVDEATIL…REIQLELMLL (159 aa). The OBG-type G domain maps to 160–333; sequence ADVGMLGLPN…LCWDVMAFIN (174 aa). Residues 166–173, 191–195, 213–216, 283–286, and 314–316 contribute to the GTP site; these read GLPNAGKS, FTTLV, DIPG, NKAD, and SAA. Positions 173 and 193 each coordinate Mg(2+). Residues 362–379 show a composition bias toward acidic residues; it reads QQEEAEETLDDDWDEDGV. A disordered region spans residues 362-385; that stretch reads QQEEAEETLDDDWDEDGVETIYQR.

This sequence belongs to the TRAFAC class OBG-HflX-like GTPase superfamily. OBG GTPase family. Monomer. The cofactor is Mg(2+).

It is found in the cytoplasm. Its function is as follows. An essential GTPase which binds GTP, GDP and possibly (p)ppGpp with moderate affinity, with high nucleotide exchange rates and a fairly low GTP hydrolysis rate. Plays a role in control of the cell cycle, stress response, ribosome biogenesis and in those bacteria that undergo differentiation, in morphogenesis control. The sequence is that of GTPase Obg from Sodalis glossinidius (strain morsitans).